The primary structure comprises 190 residues: Dynein axonemal light chain 1 (190 aa).

LRR repeat units follow at residues 49 to 70 (VCEK…NGLK), 71 to 92 (NLKI…EAVG), 94 to 115 (SLEE…HVLK), and 116 to 137 (KLKV…NKLQ). The 41-residue stretch at 150 to 190 (NPLEEKHSAEGDWQDRVTKSLKALKKLDGTPIIKNDEEEED) folds into the LRRCT domain.

It belongs to the dynein light chain LC1-type family. Interacts with DNAH5, a outer arm dynein heavy chain. Interacts with tubulin located within the A-tubule of the outer doublets in a ATP-independent manner.

The protein localises to the cytoplasm. Its subcellular location is the cytoskeleton. It localises to the cilium axoneme. Part of the multisubunit axonemal ATPase complexes that generate the force for cilia motility and govern beat frequency. Component of the outer arm dynein (ODA). May be involved in a mechanosensory feedback mechanism controlling ODA activity based on external conformational cues by tethering the outer arm dynein heavy chain (DNAH5) to the microtubule within the axoneme. The sequence is that of Dynein axonemal light chain 1 (DNAL1) from Ciona intestinalis (Transparent sea squirt).